Here is a 543-residue protein sequence, read N- to C-terminus: Zinc finger CCHC domain-containing protein 7 (543 aa).

The disordered stretch occupies residues 51 to 71 (EEEHEEKNSGNSESSSSKPNQ). The segment covering 59–68 (SGNSESSSSK) has biased composition (low complexity). Residues lysine 131, lysine 139, lysine 141, lysine 239, and lysine 254 each participate in a glycyl lysine isopeptide (Lys-Gly) (interchain with G-Cter in SUMO2) cross-link. 3 consecutive CCHC-type zinc fingers follow at residues 241–258 (IICR…NCPL), 263–280 (RRCF…SCPA), and 304–321 (KQCD…ACTE). Residue lysine 339 forms a Glycyl lysine isopeptide (Lys-Gly) (interchain with G-Cter in SUMO2) linkage. The CCHC-type 4 zinc-finger motif lies at 348–365 (AYCYHCAQKGHYGHECPE). Residues lysine 412, lysine 417, and lysine 435 each participate in a glycyl lysine isopeptide (Lys-Gly) (interchain with G-Cter in SUMO2) cross-link. Residues 414–543 (PYIKAANENP…FLIKQRKKKS (130 aa)) form a disordered region. Composition is skewed to basic and acidic residues over residues 441-457 (QENK…NRNW) and 465-475 (RHREVDEDFPR). Lysine 478 is covalently cross-linked (Glycyl lysine isopeptide (Lys-Gly) (interchain with G-Cter in SUMO2)). A compositionally biased stretch (polar residues) spans 479 to 491 (TYSSPGSFKTQKP). Residues serine 482 and serine 485 each carry the phosphoserine modification. Residues lysine 487, lysine 490, and lysine 493 each participate in a glycyl lysine isopeptide (Lys-Gly) (interchain with G-Cter in SUMO2) cross-link. The segment covering 493-502 (KPFHRSSHYH) has biased composition (basic residues). Over residues 503–515 (TSREDKSPKEGKR) the composition is skewed to basic and acidic residues. Residue lysine 537 forms a Glycyl lysine isopeptide (Lys-Gly) (interchain with G-Cter in SUMO2) linkage.

As to quaternary structure, component of a nucleolar TRAMP-like complex, an ATP-dependent exosome regulatory complex consisting of a helicase (MTREX), an oligadenylate polymerase (TENT4B or TENT4A), and a substrate specific RNA-binding factor (ZCCHC7 or ZCCHC8). Several TRAMP-like complexes exist with specific compositions and are associated with nuclear, or nucleolar RNA exosomes.

It localises to the nucleus. The protein localises to the nucleolus. The protein is Zinc finger CCHC domain-containing protein 7 (ZCCHC7) of Homo sapiens (Human).